A 354-amino-acid chain; its full sequence is Serum paraoxonase/arylesterase 2 (354 aa).

Residues Cys-42 and Cys-352 are joined by a disulfide bond. Residues Glu-53 and Asp-54 each contribute to the Ca(2+) site. His-114 (proton acceptor) is an active-site residue. Ca(2+)-binding residues include Ile-116, Asn-167, Asp-168, and Asn-223. An N-linked (GlcNAc...) asparagine glycan is attached at Asn-254. Ca(2+) contacts are provided by Asp-268 and Asn-269. N-linked (GlcNAc...) asparagine glycans are attached at residues Asn-269 and Asn-323.

Belongs to the paraoxonase family. As to quaternary structure, homotrimer. Requires Ca(2+) as cofactor. Post-translationally, the signal sequence is not cleaved. As to expression, widely expressed with highest expression in liver, lung, placenta, testis and heart.

Its subcellular location is the membrane. It carries out the reaction a phenyl acetate + H2O = a phenol + acetate + H(+). The enzyme catalyses an N-acyl-L-homoserine lactone + H2O = an N-acyl-L-homoserine + H(+). Its function is as follows. Capable of hydrolyzing lactones and a number of aromatic carboxylic acid esters. Has antioxidant activity. Is not associated with high density lipoprotein. Prevents LDL lipid peroxidation, reverses the oxidation of mildly oxidized LDL, and inhibits the ability of MM-LDL to induce monocyte chemotaxis. The protein is Serum paraoxonase/arylesterase 2 (PON2) of Homo sapiens (Human).